Here is a 765-residue protein sequence, read N- to C-terminus: Kinesin-like protein KIN-14S (765 aa).

The Kinesin motor domain maps to 132–456 (NIRVFCRCRP…LNFASRVRGI (325 aa)). 215-222 (GQTGTGKT) contributes to the ATP binding site. Residues 469–534 (ELLKSKQMAE…ERKTRIKQES (66 aa)) are a coiled coil. Disordered stretches follow at residues 581–613 (MPQQ…SSMD) and 654–678 (LRPE…RGDP). Over residues 602–611 (NNNSNRRSSS) the composition is skewed to low complexity.

It belongs to the TRAFAC class myosin-kinesin ATPase superfamily. Kinesin family. KIN-14 subfamily.

This chain is Kinesin-like protein KIN-14S, found in Arabidopsis thaliana (Mouse-ear cress).